A 1216-amino-acid chain; its full sequence is DNA polymerase subunit gamma-1 (1216 aa).

Residues Ser-27–Asp-37 show a composition bias toward low complexity. The tract at residues Ser-27–Gly-50 is disordered. Over residues Gly-38 to Gly-50 the composition is skewed to polar residues. Residues Val-179 to Glu-183 carry the Exo I motif. Residue Asp-181 is the Exonuclease activity of the active site. The Exo II motif lies at Val-250–Arg-258. Ser-289 lines the DNA pocket. Over residues Gly-301–Lys-314 the composition is skewed to basic residues. The disordered stretch occupies residues Gly-301–Gly-321. The Exo III signature appears at Tyr-377–Thr-385. The interval Thr-488–Glu-518 is disordered. Residues Ala-491–Gly-552 are accessory-interacting determinant. Over residues Met-506–Glu-518 the composition is skewed to acidic residues. Arg-560 serves as a coordination point for RNA. DNA is bound at residue Ser-574. RNA-binding residues include His-731, Gly-740, and Lys-745. DNA is bound by residues Lys-783 and Thr-826. A trigger loop region spans residues Thr-835–Asn-841. Residues Ser-840 and Arg-846 each coordinate RNA. Residues Val-864–Leu-873 carry the Pol A motif. The a 2'-deoxyribonucleoside 5'-triphosphate site is built by Asp-867, Val-868, Ser-870, Glu-872, Arg-920, Lys-924, and Tyr-928. Mg(2+) contacts are provided by Asp-867 and Val-868. Positions Arg-920–Gly-935 match the Pol B motif. Residues Thr-1071 and Ser-1072 each coordinate DNA. The Pol C motif lies at His-1111–Val-1118. Residue Asp-1112 participates in a 2'-deoxyribonucleoside 5'-triphosphate binding. Asp-1112 contacts Mg(2+).

This sequence belongs to the DNA polymerase type-A family. As to quaternary structure, heterotrimer composed of a catalytic subunit and a homodimer of accessory subunits (POLG:POLG2). Interacts with TTC3. Interacts with LIG3. Mg(2+) serves as cofactor.

It localises to the mitochondrion. The protein resides in the mitochondrion matrix. Its subcellular location is the mitochondrion nucleoid. The enzyme catalyses DNA(n) + a 2'-deoxyribonucleoside 5'-triphosphate = DNA(n+1) + diphosphate. It carries out the reaction a 3'-end 2'-deoxyribonucleotidyl-deoxyribonucleotide-DNA + H2O = a 3'-end 2'-deoxyribonucleotide-DNA + a 2'-deoxyribonucleoside 5'-phosphate + H(+). It catalyses the reaction a 5'-end 2'-deoxyribose-2'-deoxyribonucleotide-DNA = (2E,4S)-4-hydroxypenten-2-al-5-phosphate + a 5'-end 5'-phospho-2'-deoxyribonucleoside-DNA + H(+). With respect to regulation, inhibited by dideoxynucleotides such as antiviral agent zalcitabine. Its function is as follows. Catalytic subunit of DNA polymerase gamma solely responsible for replication of mitochondrial DNA (mtDNA). Replicates both heavy and light strands of the circular mtDNA genome using a single-stranded DNA template, RNA primers and the four deoxyribonucleoside triphosphates as substrates. Has 5' -&gt; 3' polymerase activity. Functionally interacts with TWNK and SSBP1 at the replication fork to form a highly processive replisome, where TWNK unwinds the double-stranded DNA template prior to replication and SSBP1 covers the parental heavy strand to enable continuous replication of the entire mitochondrial genome. A single nucleotide incorporation cycle includes binding of the incoming nucleotide at the insertion site, a phosphodiester bond formation reaction that extends the 3'-end of the primer DNA, and translocation of the primer terminus to the post-insertion site. After completing replication of a mtDNA strand, mediates 3' -&gt; 5' exonucleolytic degradation at the nick to enable proper ligation. Highly accurate due to high nucleotide selectivity and 3' -&gt; 5' exonucleolytic proofreading. Proficiently corrects base substitutions, single-base additions and deletions in non-repetitive sequences and short repeats, but displays lower proofreading activity when replicating longer homopolymeric stretches. Exerts exonuclease activity toward single-stranded DNA and double-stranded DNA containing 3'-terminal mispairs. When a misincorporation occurs, transitions from replication to a pro-nucleolytic editing mode and removes the missincorporated nucleoside in the exonuclease active site. Proceeds via an SN2 nucleolytic mechanism in which Asp-198 catalyzes phosphodiester bond hydrolysis and Glu-200 stabilizes the leaving group. As a result the primer strand becomes one nucleotide shorter and is positioned in the post-insertion site, ready to resume DNA synthesis. Exerts 5'-deoxyribose phosphate (dRP) lyase activity and mediates repair-associated mtDNA synthesis (gap filling) in base-excision repair pathway. Catalyzes the release of the 5'-terminal 2-deoxyribose-5-phosphate sugar moiety from incised apurinic/apyrimidinic (AP) sites to produce a substrate for DNA ligase. The dRP lyase reaction does not require divalent metal ions and likely proceeds via a Schiff base intermediate in a beta-elimination reaction mechanism. The protein is DNA polymerase subunit gamma-1 of Rattus norvegicus (Rat).